The chain runs to 60 residues: Cytotoxin 1 (60 aa).

4 cysteine pairs are disulfide-bonded: cysteine 3/cysteine 21, cysteine 14/cysteine 38, cysteine 42/cysteine 53, and cysteine 54/cysteine 59.

Belongs to the three-finger toxin family. Short-chain subfamily. Type IA cytotoxin sub-subfamily. As to quaternary structure, monomer in solution; Homodimer and oligomer in the presence of negatively charged lipids forming a pore with a size ranging between 20 and 30 Angstroms. In terms of tissue distribution, expressed by the venom gland.

It localises to the secreted. It is found in the target cell membrane. Functionally, shows cytolytic activity on many different cells by forming pore in lipid membranes. In vivo, increases heart rate or kills the animal by cardiac arrest. In addition, it binds to heparin with high affinity, interacts with Kv channel-interacting protein 1 (KCNIP1) in a calcium-independent manner, and binds to integrin alpha-V/beta-3 (ITGAV/ITGB3) with moderate affinity. The protein is Cytotoxin 1 of Naja nivea (Cape cobra).